Reading from the N-terminus, the 403-residue chain is Acetyl-CoA acetyltransferase IA (403 aa).

Catalysis depends on cysteine 91, which acts as the Acyl-thioester intermediate. Residues histidine 353 and cysteine 383 each act as proton acceptor in the active site. The Microbody targeting signal motif lies at 401–403; sequence AKL.

Belongs to the thiolase-like superfamily. Thiolase family. As to quaternary structure, multimeric.

The protein resides in the peroxisome. It catalyses the reaction 2 acetyl-CoA = acetoacetyl-CoA + CoA. It functions in the pathway metabolic intermediate biosynthesis; (R)-mevalonate biosynthesis; (R)-mevalonate from acetyl-CoA: step 1/3. The chain is Acetyl-CoA acetyltransferase IA (PACTA) from Candida tropicalis (Yeast).